The chain runs to 282 residues: Bifunctional protein FolD (282 aa).

Residues 164 to 166 (GRS) and serine 189 contribute to the NADP(+) site.

This sequence belongs to the tetrahydrofolate dehydrogenase/cyclohydrolase family. As to quaternary structure, homodimer.

The catalysed reaction is (6R)-5,10-methylene-5,6,7,8-tetrahydrofolate + NADP(+) = (6R)-5,10-methenyltetrahydrofolate + NADPH. The enzyme catalyses (6R)-5,10-methenyltetrahydrofolate + H2O = (6R)-10-formyltetrahydrofolate + H(+). It functions in the pathway one-carbon metabolism; tetrahydrofolate interconversion. Functionally, catalyzes the oxidation of 5,10-methylenetetrahydrofolate to 5,10-methenyltetrahydrofolate and then the hydrolysis of 5,10-methenyltetrahydrofolate to 10-formyltetrahydrofolate. This Lachnoclostridium phytofermentans (strain ATCC 700394 / DSM 18823 / ISDg) (Clostridium phytofermentans) protein is Bifunctional protein FolD.